Consider the following 238-residue polypeptide: RxLR effector protein PITG_14788 (238 aa).

Residues 1 to 23 (MKSLHAVNLVLLLLLACFAPAPA) form the signal peptide. The RxLR-dEER signature appears at 47 to 65 (RLLRAHSSGKEEQKEEEER).

This sequence belongs to the RxLR effector family.

It is found in the secreted. The protein localises to the host cytoplasm. It localises to the host cytoskeleton. Its subcellular location is the host nucleus. The protein resides in the host nucleolus. Its function is as follows. Effector that enhances P.infestans colonization of Nicotiana benthamiana leaves. This chain is RxLR effector protein PITG_14788, found in Phytophthora infestans (strain T30-4) (Potato late blight agent).